Reading from the N-terminus, the 154-residue chain is Superoxide dismutase [Cu-Zn] (154 aa).

Positions 47 and 64 each coordinate Cu cation. Cys58 and Cys147 are disulfide-bonded. His64, His72, His81, and Asp84 together coordinate Zn(2+). A Cu cation-binding site is contributed by His121. Residue Arg144 coordinates substrate.

Belongs to the Cu-Zn superoxide dismutase family. In terms of assembly, homodimer. Cu cation is required as a cofactor. It depends on Zn(2+) as a cofactor.

It is found in the cytoplasm. The enzyme catalyses 2 superoxide + 2 H(+) = H2O2 + O2. Functionally, destroys radicals which are normally produced within the cells and which are toxic to biological systems. The sequence is that of Superoxide dismutase [Cu-Zn] (SOD1) from Pleurocordyceps sinensis (Polycephalomyces sinensis).